The sequence spans 418 residues: Tryptophan synthase beta chain 1 (418 aa).

Lysine 99 carries the N6-(pyridoxal phosphate)lysine modification.

This sequence belongs to the TrpB family. Tetramer of two alpha and two beta chains. Pyridoxal 5'-phosphate is required as a cofactor.

It catalyses the reaction (1S,2R)-1-C-(indol-3-yl)glycerol 3-phosphate + L-serine = D-glyceraldehyde 3-phosphate + L-tryptophan + H2O. The protein operates within amino-acid biosynthesis; L-tryptophan biosynthesis; L-tryptophan from chorismate: step 5/5. Functionally, the beta subunit is responsible for the synthesis of L-tryptophan from indole and L-serine. This chain is Tryptophan synthase beta chain 1 (trpB1), found in Corynebacterium efficiens (strain DSM 44549 / YS-314 / AJ 12310 / JCM 11189 / NBRC 100395).